The sequence spans 166 residues: Ubiquitin-conjugating enzyme E2 13 (166 aa).

The UBC core domain occupies 4 to 164 (QACLLLQKQL…VSRCVRKSQE (161 aa)). The active-site Glycyl thioester intermediate is cysteine 89.

This sequence belongs to the ubiquitin-conjugating enzyme family.

The enzyme catalyses S-ubiquitinyl-[E1 ubiquitin-activating enzyme]-L-cysteine + [E2 ubiquitin-conjugating enzyme]-L-cysteine = [E1 ubiquitin-activating enzyme]-L-cysteine + S-ubiquitinyl-[E2 ubiquitin-conjugating enzyme]-L-cysteine.. It functions in the pathway protein modification; protein ubiquitination. Its function is as follows. Accepts the ubiquitin from the E1 complex and catalyzes its covalent attachment to other proteins. Involved in the formation of multiubiquitin chains. Signal the protein for selective degradation. The chain is Ubiquitin-conjugating enzyme E2 13 (UBC13) from Arabidopsis thaliana (Mouse-ear cress).